The primary structure comprises 78 residues: UPF0154 protein lp_2061 (78 aa).

Residues Thr-5 to Ala-27 traverse the membrane as a helical segment.

It belongs to the UPF0154 family.

Its subcellular location is the membrane. In Lactiplantibacillus plantarum (strain ATCC BAA-793 / NCIMB 8826 / WCFS1) (Lactobacillus plantarum), this protein is UPF0154 protein lp_2061.